The sequence spans 658 residues: DNA ligase (658 aa).

Residues aspartate 31 to aspartate 35, serine 80 to leucine 81, and glutamate 110 contribute to the NAD(+) site. Lysine 112 acts as the N6-AMP-lysine intermediate in catalysis. NAD(+) contacts are provided by arginine 133, glutamate 167, lysine 279, and lysine 303. Zn(2+)-binding residues include cysteine 397, cysteine 400, cysteine 415, and cysteine 420. Residues aspartate 584–glutamate 654 form the BRCT domain.

The protein belongs to the NAD-dependent DNA ligase family. LigA subfamily. It depends on Mg(2+) as a cofactor. Requires Mn(2+) as cofactor.

The enzyme catalyses NAD(+) + (deoxyribonucleotide)n-3'-hydroxyl + 5'-phospho-(deoxyribonucleotide)m = (deoxyribonucleotide)n+m + AMP + beta-nicotinamide D-nucleotide.. Functionally, DNA ligase that catalyzes the formation of phosphodiester linkages between 5'-phosphoryl and 3'-hydroxyl groups in double-stranded DNA using NAD as a coenzyme and as the energy source for the reaction. It is essential for DNA replication and repair of damaged DNA. In Mycoplasma pneumoniae (strain ATCC 29342 / M129 / Subtype 1) (Mycoplasmoides pneumoniae), this protein is DNA ligase.